The sequence spans 254 residues: 2-dehydro-3-deoxy-D-gluconate 5-dehydrogenase (254 aa).

16–40 (LVTGPGTGIGQGIAKALAGAGADII) lines the NAD(+) pocket. Substrate is bound at residue serine 146. The active-site Proton acceptor is the tyrosine 159.

It belongs to the short-chain dehydrogenases/reductases (SDR) family.

The enzyme catalyses 2-dehydro-3-deoxy-D-gluconate + NAD(+) = 3-deoxy-D-glycero-2,5-hexodiulosonate + NADH + H(+). It functions in the pathway glycan metabolism; pectin degradation; 2-dehydro-3-deoxy-D-gluconate from pectin: step 5/5. Functionally, catalyzes the reduction of 2,5-diketo-3-deoxygluconate (DKII or 4,6-dihydroxy-2,5-dioxohexanoate) into 2-keto-3-deoxygluconate (KDG or 2-dehydro-3-deoxygluconate) with a concomitant oxidation of NADH. The chain is 2-dehydro-3-deoxy-D-gluconate 5-dehydrogenase (kduD) from Bacillus subtilis (strain 168).